Consider the following 190-residue polypeptide: Elongation factor P 1 (190 aa).

Belongs to the elongation factor P family.

It is found in the cytoplasm. The protein operates within protein biosynthesis; polypeptide chain elongation. In terms of biological role, involved in peptide bond synthesis. Stimulates efficient translation and peptide-bond synthesis on native or reconstituted 70S ribosomes in vitro. Probably functions indirectly by altering the affinity of the ribosome for aminoacyl-tRNA, thus increasing their reactivity as acceptors for peptidyl transferase. The protein is Elongation factor P 1 (efp1) of Lactobacillus johnsonii (strain CNCM I-12250 / La1 / NCC 533).